The following is a 516-amino-acid chain: Alstonine synthase (516 aa).

Residues 6–26 (NFSLTSPIFLLLSSLFLIILL) form a helical membrane-spanning segment. A heme-binding site is contributed by C453.

Belongs to the cytochrome P450 family. Heme is required as a cofactor. Highly expressed in stems. Expressed at low levels in roots.

It is found in the endoplasmic reticulum membrane. The catalysed reaction is tetrahydroalstonine + A + reduced [NADPH--hemoprotein reductase] + O2 = alstonine + AH2 + oxidized [NADPH--hemoprotein reductase] + 2 H2O + H(+). It carries out the reaction ajmalicine + A + reduced [NADPH--hemoprotein reductase] + O2 = serpentine + AH2 + oxidized [NADPH--hemoprotein reductase] + 2 H2O + H(+). It participates in alkaloid biosynthesis. In terms of biological role, involved in monoterpene indole alkaloids (MIAs) biosynthesis. Converts by aromatization the tetrahydro-beta-carboline alkaloids tetrahydroalstonine and ajmalicine to the corresponding beta-carboline alkaloids alstonine and serpentine, respectively. This is Alstonine synthase from Catharanthus roseus (Madagascar periwinkle).